Here is a 748-residue protein sequence, read N- to C-terminus: Polyribonucleotide nucleotidyltransferase (748 aa).

Mg(2+)-binding residues include D487 and D493. The KH domain occupies 554–613 (PSTTTIKIDKDKIRDIIGPGGKVIKEICETSGAKIDISDDGTVSVYASDRDKLKVALDKI). The S1 motif domain maps to 623–691 (GEIFNGTVVK…NKGKAKLTIK (69 aa)). The tract at residues 695 to 733 (KDKFSNNTKPKTSVNNTKDNSEPEQRHDSSKKRAWNEDN) is disordered. Over residues 699–712 (SNNTKPKTSVNNTK) the composition is skewed to polar residues. Over residues 713–722 (DNSEPEQRHD) the composition is skewed to basic and acidic residues.

This sequence belongs to the polyribonucleotide nucleotidyltransferase family. Requires Mg(2+) as cofactor.

It localises to the cytoplasm. It carries out the reaction RNA(n+1) + phosphate = RNA(n) + a ribonucleoside 5'-diphosphate. Its function is as follows. Involved in mRNA degradation. Catalyzes the phosphorolysis of single-stranded polyribonucleotides processively in the 3'- to 5'-direction. This chain is Polyribonucleotide nucleotidyltransferase, found in Rickettsia rickettsii (strain Iowa).